The sequence spans 246 residues: MRSAMNPKDTLFSAPIDKIGDFTFDERVAEVFPDMIQRSVPGYSNIISAIGMLAERFVKPHSKIYDLGCSLGAATLSMRRHIKQEGCQIIAVDNSAAMVERCKLHLNAYRSDTPVQVIEADIRDIAIENASVVVLNFTLQFLAPDDRYALLEKIYAGLRPGGILILSEKFVFSDQEAHELLIDLHHDFKRANGYSELEISQKRSAIENVMRPDSIQTHKQRFATLGFSSFEVWFQCFNFGSMFAIK.

S-adenosyl-L-methionine-binding positions include Tyr-43, 68 to 70, 93 to 94, 121 to 122, Asn-136, and Arg-203; these read GCS, DN, and DI.

Belongs to the class I-like SAM-binding methyltransferase superfamily. Cx-SAM synthase family. As to quaternary structure, homodimer.

The catalysed reaction is prephenate + S-adenosyl-L-methionine = carboxy-S-adenosyl-L-methionine + 3-phenylpyruvate + H2O. Functionally, catalyzes the conversion of S-adenosyl-L-methionine (SAM) to carboxy-S-adenosyl-L-methionine (Cx-SAM). This chain is Carboxy-S-adenosyl-L-methionine synthase, found in Vibrio cholerae serotype O1 (strain ATCC 39541 / Classical Ogawa 395 / O395).